A 310-amino-acid polypeptide reads, in one-letter code: tRNA dimethylallyltransferase (310 aa).

Position 14–21 (14–21 (GPTASGKT)) interacts with ATP. 16–21 (TASGKT) is a substrate binding site. Interaction with substrate tRNA regions lie at residues 39-42 (DSAL), 163-167 (QRLSR), and 244-249 (RCVGYR).

This sequence belongs to the IPP transferase family. In terms of assembly, monomer. It depends on Mg(2+) as a cofactor.

It catalyses the reaction adenosine(37) in tRNA + dimethylallyl diphosphate = N(6)-dimethylallyladenosine(37) in tRNA + diphosphate. Catalyzes the transfer of a dimethylallyl group onto the adenine at position 37 in tRNAs that read codons beginning with uridine, leading to the formation of N6-(dimethylallyl)adenosine (i(6)A). The polypeptide is tRNA dimethylallyltransferase (Tolumonas auensis (strain DSM 9187 / NBRC 110442 / TA 4)).